A 173-amino-acid chain; its full sequence is UPF0316 protein Amet_0954 (173 aa).

The next 3 membrane-spanning stretches (helical) occupy residues 3-23 (LVLG…MGTV), 38-58 (AIGF…LEAL), and 61-81 (PVNI…GIYI).

The protein belongs to the UPF0316 family.

The protein resides in the cell membrane. The polypeptide is UPF0316 protein Amet_0954 (Alkaliphilus metalliredigens (strain QYMF)).